A 257-amino-acid chain; its full sequence is MNVLLTNDDGIRAKGLRALYAALREAGHTVYVVAPMSQQSGVGHSLTVFEPVRATVIEEPDFTGTGVYGTPTDCVKLALGRLLPHKPDLVMSGINAGANVGPDILYSGTVGAATEAAHEELPSMAVSFDSFSHNTAPDMDLMPQARHAVNLAERMNWSAVGRRRVININYPACPLDEAQDLRVCPQTSAVWKNVYIEREDPRGAPYWWLEGEIPPASIEPGSDKDLLNRGHITLTPLCFDFTDHEGLTALKCMKLQG.

D8, D9, S40, and N95 together coordinate a divalent metal cation.

This sequence belongs to the SurE nucleotidase family. Requires a divalent metal cation as cofactor.

The protein resides in the cytoplasm. It carries out the reaction a ribonucleoside 5'-phosphate + H2O = a ribonucleoside + phosphate. Nucleotidase that shows phosphatase activity on nucleoside 5'-monophosphates. The protein is 5'-nucleotidase SurE of Desulfovibrio desulfuricans (strain ATCC 27774 / DSM 6949 / MB).